A 299-amino-acid chain; its full sequence is Oxygen-dependent coproporphyrinogen-III oxidase (299 aa).

Residue Ser-92 coordinates substrate. Residues His-96 and His-106 each contribute to the a divalent metal cation site. His-106 serves as the catalytic Proton donor. 108–110 is a binding site for substrate; sequence NVR. A divalent metal cation-binding residues include His-145 and His-175. The segment at 240 to 275 is important for dimerization; it reads YVEFNLVWDRGTLFGLQTGGRTESILMSMPPLVRWE. A substrate-binding site is contributed by 258-260; sequence GGR.

Belongs to the aerobic coproporphyrinogen-III oxidase family. As to quaternary structure, homodimer. It depends on a divalent metal cation as a cofactor.

Its subcellular location is the cytoplasm. The catalysed reaction is coproporphyrinogen III + O2 + 2 H(+) = protoporphyrinogen IX + 2 CO2 + 2 H2O. The protein operates within porphyrin-containing compound metabolism; protoporphyrin-IX biosynthesis; protoporphyrinogen-IX from coproporphyrinogen-III (O2 route): step 1/1. In terms of biological role, involved in the heme biosynthesis. Catalyzes the aerobic oxidative decarboxylation of propionate groups of rings A and B of coproporphyrinogen-III to yield the vinyl groups in protoporphyrinogen-IX. The polypeptide is Oxygen-dependent coproporphyrinogen-III oxidase (Salmonella dublin (strain CT_02021853)).